Here is a 172-residue protein sequence, read N- to C-terminus: MAKMQAKVQADERDDGLREKMISVNRVTKVVKGGRILGFAALTVVGDGDGRIGMGKGKAKEVPVAVQKAMEQARRNMFKVPLKNGTLQHEVHGKHGASAVLLAPAKDGTGVIAGGPMRAVFDVMGVQNVVAKSHGSTNPYNLVRATLDGLRKQSTPGDIAAKRGKSVEDILG.

In terms of domain architecture, S5 DRBM spans 17 to 80 (LREKMISVNR…EQARRNMFKV (64 aa)).

This sequence belongs to the universal ribosomal protein uS5 family. In terms of assembly, part of the 30S ribosomal subunit. Contacts proteins S4 and S8.

Functionally, with S4 and S12 plays an important role in translational accuracy. In terms of biological role, located at the back of the 30S subunit body where it stabilizes the conformation of the head with respect to the body. In Paraburkholderia xenovorans (strain LB400), this protein is Small ribosomal subunit protein uS5.